The chain runs to 518 residues: Nicotine N-demethylase CYP82E3 (518 aa).

The chain crosses the membrane as a helical span at residues 2–22 (VFPVEAIVGLVTFTFLFYFLW). Lysine 254 participates in a covalent cross-link: Glycyl lysine isopeptide (Lys-Gly) (interchain with G-Cter in ubiquitin). Residue cysteine 458 participates in heme binding.

Belongs to the cytochrome P450 family. CYP82E2 subfamily. The cofactor is heme. In terms of tissue distribution, expressed in leaves.

It localises to the membrane. The enzyme catalyses (S)-nicotine + reduced [NADPH--hemoprotein reductase] + O2 = (S)-nornicotine + formaldehyde + oxidized [NADPH--hemoprotein reductase] + H2O + H(+). It participates in alkaloid biosynthesis; nicotine biosynthesis. Functionally, involved in the biosynthesis of pyridine alkaloid natural products, leading mainly to the production of anabasine, anatabine, nicotine and nornicotine, effective deterrents against herbivores with antiparasitic and pesticide properties (neurotoxins); nornicotine serves as the precursor in the synthesis of the carcinogen compound N'-nitrosonornicotine (NNN). Catalyzes the demethylation of nicotine to form nornicotine. This is Nicotine N-demethylase CYP82E3 from Nicotiana tomentosiformis (Tobacco).